The following is a 276-amino-acid chain: Secretagogin (276 aa).

EF-hand domains lie at 12-47 (LDAA…VLTK), 58-93 (NVWK…EDEN), 105-140 (DSSV…LFLH), 149-184 (KLEE…QENF), 197-232 (ERKR…MMEL), and 240-276 (VDLD…KINP). Positions 71, 73, 75, 77, 82, 118, 120, 122, 129, 162, 164, 166, 168, 173, 210, 212, 214, 221, 254, 256, 258, 260, and 265 each coordinate Ca(2+).

It is found in the cytoplasm. It localises to the secreted. Its subcellular location is the cytoplasmic vesicle. The protein localises to the secretory vesicle membrane. The polypeptide is Secretagogin (SCGN) (Sus scrofa (Pig)).